The following is a 303-amino-acid chain: Putative S-adenosyl-L-methionine-dependent methyltransferase MAV_4435 (303 aa).

Residues Asp129 and 158–159 (DL) each bind S-adenosyl-L-methionine.

It belongs to the UPF0677 family.

Its function is as follows. Exhibits S-adenosyl-L-methionine-dependent methyltransferase activity. This chain is Putative S-adenosyl-L-methionine-dependent methyltransferase MAV_4435, found in Mycobacterium avium (strain 104).